Consider the following 87-residue polypeptide: Large ribosomal subunit protein bL31B-2/bL31B-3 (87 aa).

The protein belongs to the bacterial ribosomal protein bL31 family. Type B subfamily. As to quaternary structure, part of the 50S ribosomal subunit.

This chain is Large ribosomal subunit protein bL31B-2/bL31B-3 (rpmE2-2), found in Escherichia coli O157:H7.